Consider the following 289-residue polypeptide: ATP synthase subunit a (289 aa).

The next 6 helical transmembrane spans lie at 43-63, 101-121, 160-180, 193-213, 232-252, and 259-279; these read AFHVDTLGWSVALGLIFVLIF, SAVIAPLALTIFVWVFLMNAV, LSVFALIIFYSIKVKGIGGFI, LFVQALLIPVNFLLEFVTLIA, VFILIAVMFGSGLLWLSGLGV, and AVFHILIITLQAFIFMMLTIV.

The protein belongs to the ATPase A chain family. In terms of assembly, F-type ATPases have 2 components, CF(1) - the catalytic core - and CF(0) - the membrane proton channel. CF(1) has five subunits: alpha(3), beta(3), gamma(1), delta(1), epsilon(1). CF(0) has three main subunits: a(1), b(2) and c(9-12). The alpha and beta chains form an alternating ring which encloses part of the gamma chain. CF(1) is attached to CF(0) by a central stalk formed by the gamma and epsilon chains, while a peripheral stalk is formed by the delta and b chains.

It is found in the cell inner membrane. Key component of the proton channel; it plays a direct role in the translocation of protons across the membrane. This chain is ATP synthase subunit a, found in Pseudomonas savastanoi pv. phaseolicola (strain 1448A / Race 6) (Pseudomonas syringae pv. phaseolicola (strain 1448A / Race 6)).